A 647-amino-acid polypeptide reads, in one-letter code: Spindle pole body-associated protein VIK1 (647 aa).

Positions 36 to 51 (NTTNTMNGSRPSSMKS) are enriched in polar residues. Residues 36–55 (NTTNTMNGSRPSSMKSSLAL) form a disordered region. Positions 202–350 (DHEITEEISQ…SKQEKFYNDT (149 aa)) form a coiled coil.

As to quaternary structure, interacts with KAR3; the interaction is direct.

The protein resides in the cytoplasm. The protein localises to the cytoskeleton. It localises to the microtubule organizing center. Its subcellular location is the spindle pole body. It is found in the nucleus. Its function is as follows. Together with the minus end-directed microtubule motor KAR3, plays a role in microtubule organization. Recruits KAR3 to microtubules, and together they may stabilize the polymers. The KAR3-VIK1 heterodimer cross-links anti-parallel microtubules. Targets and/or maintains KAR3 at the spindle pole body during vegetative growth. This chain is Spindle pole body-associated protein VIK1 (VIK1), found in Saccharomyces cerevisiae (strain ATCC 204508 / S288c) (Baker's yeast).